The chain runs to 172 residues: Large ribosomal subunit protein uL10 (172 aa).

The protein belongs to the universal ribosomal protein uL10 family. As to quaternary structure, part of the ribosomal stalk of the 50S ribosomal subunit. The N-terminus interacts with L11 and the large rRNA to form the base of the stalk. The C-terminus forms an elongated spine to which L12 dimers bind in a sequential fashion forming a multimeric L10(L12)X complex.

Functionally, forms part of the ribosomal stalk, playing a central role in the interaction of the ribosome with GTP-bound translation factors. This Ruegeria pomeroyi (strain ATCC 700808 / DSM 15171 / DSS-3) (Silicibacter pomeroyi) protein is Large ribosomal subunit protein uL10.